Here is a 204-residue protein sequence, read N- to C-terminus: Protein GrpE (204 aa).

The segment at 1–42 (MTDETAKNGPDAAADAQIEPQVQEETNSTAEDAGQDNNPTAA) is disordered. Residues 23 to 41 (QEETNSTAEDAGQDNNPTA) show a composition bias toward polar residues.

The protein belongs to the GrpE family. Homodimer.

The protein resides in the cytoplasm. In terms of biological role, participates actively in the response to hyperosmotic and heat shock by preventing the aggregation of stress-denatured proteins, in association with DnaK and GrpE. It is the nucleotide exchange factor for DnaK and may function as a thermosensor. Unfolded proteins bind initially to DnaJ; upon interaction with the DnaJ-bound protein, DnaK hydrolyzes its bound ATP, resulting in the formation of a stable complex. GrpE releases ADP from DnaK; ATP binding to DnaK triggers the release of the substrate protein, thus completing the reaction cycle. Several rounds of ATP-dependent interactions between DnaJ, DnaK and GrpE are required for fully efficient folding. In Allorhizobium ampelinum (strain ATCC BAA-846 / DSM 112012 / S4) (Agrobacterium vitis (strain S4)), this protein is Protein GrpE.